The chain runs to 24 residues: Frenatin-4 (24 aa).

Expressed by the skin glands.

The protein resides in the secreted. Very weak antimicrobial peptide since it does not show activity below 100 ug/ml against Bacillus cereus, Escherichia coli, Leuconostoc mesenteroides, Micrococcus luteus, Pastewella haemolytica, Staphylococcus aureus, Streptococcus faecalis and Streptococcus uberis. This is Frenatin-4 from Nyctimystes infrafrenatus (White-lipped tree frog).